We begin with the raw amino-acid sequence, 380 residues long: uncharacterized protein (380 aa).

Residues 256–301 (DKEEKIQKSYQYQTELITELQGRIAELEKENQSLKENVKEPETSKP) are a coiled coil.

This is an uncharacterized protein from Pasteurella multocida (strain Pm70).